The sequence spans 218 residues: Phosphoenolpyruvate guanylyltransferase (218 aa).

Residues Thr-151, Gly-166, and Ser-169 each contribute to the phosphoenolpyruvate site.

This sequence belongs to the CofC family.

The catalysed reaction is phosphoenolpyruvate + GTP + H(+) = enolpyruvoyl-2-diphospho-5'-guanosine + diphosphate. The protein operates within cofactor biosynthesis; coenzyme F420 biosynthesis. Its function is as follows. Guanylyltransferase that catalyzes the activation of phosphoenolpyruvate (PEP) as enolpyruvoyl-2-diphospho-5'-guanosine, via the condensation of PEP with GTP. It is involved in the biosynthesis of coenzyme F420, a hydride carrier cofactor. The protein is Phosphoenolpyruvate guanylyltransferase of Mycobacterium sp. (strain KMS).